A 526-amino-acid chain; its full sequence is Transcription factor kayak (526 aa).

Disordered regions lie at residues Pro71 to Gly165 and Arg178 to Ala221. 2 stretches are compositionally biased toward low complexity: residues Asn78–Gly87 and Ile133–Gly153. A compositionally biased stretch (gly residues) spans Asn154–Gly165. Over residues Arg178–Thr187 the composition is skewed to polar residues. One can recognise a bZIP domain in the interval Glu208–His271. Residues Lys210–Arg229 form a basic motif region. The leucine-zipper stretch occupies residues Leu236–Leu264. Residues Gly301–Gly322 show a composition bias toward low complexity. Disordered regions lie at residues Gly301–Pro345 and Thr504–Leu526. The segment covering Thr330–Pro340 has biased composition (polar residues). Ser339 carries the post-translational modification Phosphoserine.

Belongs to the bZIP family. Fos subfamily. As to quaternary structure, homodimer. Heterodimer with Jra. The kay-Jra heterodimer binds more stably to the AP-1 site than either of the two proteins alone.

It is found in the nucleus. Functionally, developmentally regulated transcription factor AP-1 binds and recognizes the enhancer DNA sequence: 5'-TGA[CG]TCA-3'. May play a role in the function or determination of a particular subset of cells in the developing embryo. It is able to carry out its function either independently of or in conjunction with Jra. The polypeptide is Transcription factor kayak (Drosophila persimilis (Fruit fly)).